Reading from the N-terminus, the 464-residue chain is MSKLFERDDDIVALATPFLSSALCVIRSSGASSISKFSKIFSNHSALNSAAGNTIHYGYILDNENNCKVDEVVVCLYRAPKSFTGQDAVEVIAHGSVIGIKKIIDLFLKSGFRMAEPGEFTFRSFLAKKIDLTKAEAINEIIFAKTNKAYSLAVNKLSGALFVKIDTIKKCILNFLSAVSVYLDYEVDDREIDIPFDLILNSKVELKKLIDSYKVYEKIDHGITLVLAGSVNAGKSSLFNLFLKKDRSIVSSYPGTTRDYIEASFELDGILFNLFDTAGLRDADNFVERLGIEKSNSLIKEASLVIYVIDISSNLTRDDLLFIDSNKSNSKILFVLNKIDLKINKSTEEFVRSSVLNSSNLIMISIKNLEGIDILYDKIRTLISYERVEIGLDDIIISSSRQIQLLEKAYALILDLLSKIDRQVSYDMLAFDAYEIINCLGEITGEVSSEDVLDNMFKNFCLGK.

(6S)-5-formyl-5,6,7,8-tetrahydrofolate contacts are provided by R27, E90, and K129. The TrmE-type G domain occupies 222-384 (GITLVLAGSV…LYDKIRTLIS (163 aa)). Residues 232-237 (NAGKSS), 251-257 (SSYPGTT), and 276-279 (DTAG) each bind GTP. Mg(2+)-binding residues include S236 and T257. K464 is a binding site for (6S)-5-formyl-5,6,7,8-tetrahydrofolate.

It belongs to the TRAFAC class TrmE-Era-EngA-EngB-Septin-like GTPase superfamily. TrmE GTPase family. Homodimer. Heterotetramer of two MnmE and two MnmG subunits. The cofactor is K(+).

Its subcellular location is the cytoplasm. Its function is as follows. Exhibits a very high intrinsic GTPase hydrolysis rate. Involved in the addition of a carboxymethylaminomethyl (cmnm) group at the wobble position (U34) of certain tRNAs, forming tRNA-cmnm(5)s(2)U34. The chain is tRNA modification GTPase MnmE from Borreliella afzelii (strain PKo) (Borrelia afzelii).